Reading from the N-terminus, the 116-residue chain is T-cell leukemia/lymphoma protein 1A (116 aa).

This sequence belongs to the TCL1 family. As to quaternary structure, homodimer. Interacts with AKT1, AKT2 and AKT3 (via PH domain). Interacts with PNPT1; the interaction has no effect on PNPT1 exonuclease activity.

The protein localises to the cytoplasm. It localises to the nucleus. The protein resides in the microsome. Its subcellular location is the endoplasmic reticulum. In terms of biological role, enhances the phosphorylation and activation of AKT1 and AKT2. Enhances cell proliferation, stabilizes mitochondrial membrane potential and promotes cell survival. In Mus musculus (Mouse), this protein is T-cell leukemia/lymphoma protein 1A (Tcl1a).